The following is a 241-amino-acid chain: Probable GTP-binding protein EngB (241 aa).

Residues 56 to 240 (GPVEIAFAGR…RAAIALLLKE (185 aa)) enclose the EngB-type G domain. GTP is bound by residues 64–71 (GRSNVGKS), 91–95 (GRTQE), 118–121 (DMPG), 185–188 (TKID), and 219–221 (TSS). Mg(2+)-binding residues include Ser-71 and Thr-93.

The protein belongs to the TRAFAC class TrmE-Era-EngA-EngB-Septin-like GTPase superfamily. EngB GTPase family. It depends on Mg(2+) as a cofactor.

Functionally, necessary for normal cell division and for the maintenance of normal septation. This chain is Probable GTP-binding protein EngB, found in Brucella suis biovar 1 (strain 1330).